The chain runs to 610 residues: Glutamine--fructose-6-phosphate aminotransferase [isomerizing] (610 aa).

Cys2 acts as the Nucleophile; for GATase activity in catalysis. The Glutamine amidotransferase type-2 domain maps to 2-218 (CGIVGAVAQR…EGDVAEITRR (217 aa)). SIS domains are found at residues 286–426 (AADI…EQGR) and 459–600 (LATD…VDQP). The active-site For Fru-6P isomerization activity is Lys605.

As to quaternary structure, homodimer.

It localises to the cytoplasm. The enzyme catalyses D-fructose 6-phosphate + L-glutamine = D-glucosamine 6-phosphate + L-glutamate. Functionally, catalyzes the first step in hexosamine metabolism, converting fructose-6P into glucosamine-6P using glutamine as a nitrogen source. The chain is Glutamine--fructose-6-phosphate aminotransferase [isomerizing] from Vibrio parahaemolyticus serotype O3:K6 (strain RIMD 2210633).